Here is a 170-residue protein sequence, read N- to C-terminus: Photosystem I assembly protein Ycf3 (170 aa).

TPR repeat units follow at residues 35–68 (AFTY…EIDP), 72–105 (SYIL…NPFL), and 120–153 (GEQA…TPGN).

Belongs to the Ycf3 family.

It localises to the plastid. Its subcellular location is the chloroplast thylakoid membrane. In terms of biological role, essential for the assembly of the photosystem I (PSI) complex. May act as a chaperone-like factor to guide the assembly of the PSI subunits. In Saccharum officinarum (Sugarcane), this protein is Photosystem I assembly protein Ycf3.